The sequence spans 553 residues: Glycine betaine/proline/choline transporter VP1723 (553 aa).

A run of 12 helical transmembrane segments spans residues 43–63 (NRVF…TLTF), 85–105 (FFLA…VTPL), 122–142 (AGWL…FFGV), 191–211 (WALH…IFSF), 231–251 (VWGW…VFGL), 278–298 (TQVV…VAGL), 310–330 (MILA…MAIL), 362–382 (WTAF…MFIA), 393–413 (FIIC…TAFG), 443–463 (VMPF…VFFI), 490–510 (VFWC…GGLA), and 515–535 (MAVT…VSLI).

Belongs to the BCCT transporter (TC 2.A.15) family.

The protein localises to the cell inner membrane. Involved in the uptake of osmoprotectants. Can transport glycine betaine, proline and choline. This is Glycine betaine/proline/choline transporter VP1723 from Vibrio parahaemolyticus serotype O3:K6 (strain RIMD 2210633).